The following is a 522-amino-acid chain: Circadian clock oscillator protein KaiC (522 aa).

KaiC domains follow at residues 1–248 (MKKS…INIF) and 262–522 (ARVS…DDLL). The ATP site is built by glycine 50, threonine 51, glycine 52, lysine 53, threonine 54, serine 90, lysine 225, leucine 226, arginine 227, threonine 229, histidine 231, threonine 241, aspartate 242, threonine 291, glycine 292, threonine 293, glycine 294, lysine 295, threonine 296, and leucine 297. Residue threonine 54 participates in Mg(2+) binding. Mg(2+) is bound at residue threonine 296. Glutamate 319 provides a ligand contact to Mg(2+). Tryptophan 332 is a binding site for ATP. Phosphoserine; by autocatalysis is present on serine 432. Threonine 433 carries the phosphothreonine; by autocatalysis modification. Residues arginine 452, lysine 458, methionine 459, arginine 460, serine 462, histidine 464, and lysine 466 each contribute to the ATP site.

Belongs to the KaiC family. As to quaternary structure, homohexamer; hexamerization is dependent on ATP-binding. The KaiABC complex composition changes during the circadian cycle to control KaiC phosphorylation. Complexes KaiC(6), KaiA(2-4):KaiC(6), KaiB(6):KaiC(6) and KaiC(6):KaiB(6):KaiA(12) are among the most important forms, many form cooperatively. KaiC interacts with SasA, activating its autokinase function and leading to RpaA activation. Mg(2+) is required as a cofactor. Post-translationally, phosphorylated on serine and threonine residues by autocatalysis. Has a 4 step phosphorylation cycle; the autokinase acts first on Thr-433, then Ser-432. When Ser-432 is modified KaiC switches to an autophosphatase mode, acting first on phospho-Thr-433 then phospho-Ser-432.

The catalysed reaction is L-seryl-[protein] + ATP = O-phospho-L-seryl-[protein] + ADP + H(+). It catalyses the reaction L-threonyl-[protein] + ATP = O-phospho-L-threonyl-[protein] + ADP + H(+). It carries out the reaction ATP + H2O = ADP + phosphate + H(+). The interaction with KaiA enhances its phosphorylation status, while the interaction with KaiB decreases it. In terms of biological role, central component of the KaiABC oscillator complex, which constitutes the main circadian regulator in cyanobacteria. Complex composition changes during the circadian cycle to control KaiC phosphorylation. KaiA stimulates KaiC autophosphorylation, while KaiB sequesters KaiA, leading to KaiC autodephosphorylation. Clock output pathways impact the RpaA transcriptional regulator. KaiC enhances the autophosphorylation activity of SasA, which then transfers its phosphate group to RpaA to activate it. KaiB and KaiC together enhance the phospho-RpaA dephosphatase activity of CikA. Its function is as follows. Has a weak, temperature-independent ATPase activity; ATPase activity defines the circadian period. The phosphorylation state of KaiC modulates its ATPase activity and effects KaiB binding. This chain is Circadian clock oscillator protein KaiC, found in Acaryochloris marina (strain MBIC 11017).